We begin with the raw amino-acid sequence, 285 residues long: Urease accessory protein UreD (285 aa).

The protein belongs to the UreD family. As to quaternary structure, ureD, UreF and UreG form a complex that acts as a GTP-hydrolysis-dependent molecular chaperone, activating the urease apoprotein by helping to assemble the nickel containing metallocenter of UreC. The UreE protein probably delivers the nickel.

It localises to the cytoplasm. Required for maturation of urease via the functional incorporation of the urease nickel metallocenter. The chain is Urease accessory protein UreD from Cenarchaeum symbiosum (strain A).